The chain runs to 160 residues: Putative pre-16S rRNA nuclease (160 aa).

Belongs to the YqgF nuclease family.

The protein resides in the cytoplasm. Could be a nuclease involved in processing of the 5'-end of pre-16S rRNA. The chain is Putative pre-16S rRNA nuclease from Rhodopseudomonas palustris (strain HaA2).